The sequence spans 366 residues: Alanine racemase (366 aa).

The active-site Proton acceptor; specific for D-alanine is the lysine 40. Residue lysine 40 is modified to N6-(pyridoxal phosphate)lysine. A substrate-binding site is contributed by arginine 136. Tyrosine 263 functions as the Proton acceptor; specific for L-alanine in the catalytic mechanism. Methionine 310 serves as a coordination point for substrate.

It belongs to the alanine racemase family. Pyridoxal 5'-phosphate is required as a cofactor.

The catalysed reaction is L-alanine = D-alanine. It participates in amino-acid biosynthesis; D-alanine biosynthesis; D-alanine from L-alanine: step 1/1. Its function is as follows. Catalyzes the interconversion of L-alanine and D-alanine. May also act on other amino acids. In Streptococcus equi subsp. equi (strain 4047), this protein is Alanine racemase (alr).